We begin with the raw amino-acid sequence, 102 residues long: Small ribosomal subunit protein eS24 (102 aa).

Belongs to the eukaryotic ribosomal protein eS24 family.

The protein is Small ribosomal subunit protein eS24 of Methanococcus maripaludis (strain C5 / ATCC BAA-1333).